A 110-amino-acid chain; its full sequence is Glutaredoxin-2 (110 aa).

The Glutaredoxin domain occupies 6–106; the sequence is KAFVEKAISN…KMIAELKENK (101 aa). Cys26 and Cys29 are joined by a disulfide.

Belongs to the glutaredoxin family.

Functionally, the disulfide bond functions as an electron carrier in the glutathione-dependent synthesis of deoxyribonucleotides by the enzyme ribonucleotide reductase. In addition, it is also involved in reducing some disulfides in a coupled system with glutathione reductase. Thioltransferase catalyzes cellular thiol-disulfide transhydrogenation reactions. It transfers reducing equivalents to cytosolic protein and nonprotein disulfides. The polypeptide is Glutaredoxin-2 (grx2) (Schizosaccharomyces pombe (strain 972 / ATCC 24843) (Fission yeast)).